The primary structure comprises 182 residues: Probable RNA 2'-phosphotransferase (182 aa).

The protein belongs to the KptA/TPT1 family.

Removes the 2'-phosphate from RNA via an intermediate in which the phosphate is ADP-ribosylated by NAD followed by a presumed transesterification to release the RNA and generate ADP-ribose 1''-2''-cyclic phosphate (APPR&gt;P). May function as an ADP-ribosylase. The chain is Probable RNA 2'-phosphotransferase from Pseudomonas paraeruginosa (strain DSM 24068 / PA7) (Pseudomonas aeruginosa (strain PA7)).